Consider the following 744-residue polypeptide: MAVPPGPPQLLQVLLTISLGSIRLIQAGAYYGIKPLPPQIPPQMPPQIPQYQPLGQQVPHMPLAKDGLTMGKEMPHAQYGKEYPHLPQYMKEVQPVPRMGKEAVPKKGKEIPLASLRGEQGPRGEPGPRGPPGPPGLPGQGIPGIKGKPGPQGYPGVGKPGMPGMPGKPGAMGMPGAKGEIGPKGEIGPMGIPGPQGPPGPHGLPGIGKPGGPGLPGQPGAKGDRGPKGPPGPPGLQGPKGEKGFGMPGLPGLKGPPGMHGPPGPVGLPGVGKPGVTGFPGPQGPLGKPGPPGEPGPQGPIGVPGVQGPPGLPGVGKPGQDGIPGQPGFPGGKGEQGLPGLPGPPGLPGVGKPGFPGPKGDRGIGGVPGALGPRGEKGPVGAPGMGGPPGEPGLPGIPGPMGPPGAIGFPGPKGEGGIVGPQGPPGPKGEPGLQGFPGKPGFLGEVGPPGIRGLPGPIGPKGEAGHKGLPGLPGVPGLLGPKGEPGIPGDQGLQGPPGIPGITGPSGPIGPPGIPGPKGEPGLPGPPGFPGVGKPGVAGLHGPPGKPGALGPQGQPGLPGPPGPPGPPGPPAVMPPTPAPQGEYLPDMGLGIDGVKTPHAYAAKKGKNGGPAYEMPAFTAELTAPFPPVGAPIKFDRLLYNGRQNYNPQTGIFTCEVPGVYYFAYHVHCKGGNVWVALFKNNEPVMYTYDEYKKGFLDQASGSAVLLLRPGDRVFLQMPSEQAAGLYAGQYVHSSFSGYLLYPM.

An N-terminal signal peptide occupies residues 1-27 (MAVPPGPPQLLQVLLTISLGSIRLIQA). The segment at 29–117 (AYYGIKPLPP…GKEIPLASLR (89 aa)) is nonhelical region (NC2). The span at 101–110 (KEAVPKKGKE) shows a compositional bias: basic and acidic residues. Disordered stretches follow at residues 101 to 435 (KEAV…GLQG) and 478 to 584 (LLGP…QGEY). Residues 118-571 (GEQGPRGEPG…PGPPGPPGPP (454 aa)) form a triple-helical region region. Positions 128 to 137 (PRGPPGPPGL) are enriched in pro residues. Low complexity predominate over residues 168–190 (KPGAMGMPGAKGEIGPKGEIGPM). Over residues 203–217 (GLPGIGKPGGPGLPG) the composition is skewed to gly residues. Positions 288–298 (KPGPPGEPGPQ) are enriched in pro residues. Over residues 328-337 (GFPGGKGEQG) the composition is skewed to gly residues. The span at 389–403 (PGEPGLPGIPGPMGP) shows a compositional bias: pro residues. Over residues 411 to 420 (GPKGEGGIVG) the composition is skewed to gly residues. Composition is skewed to low complexity over residues 478-506 (LLGPKGEPGIPGDQGLQGPPGIPGITGPS) and 540-556 (LHGPPGKPGALGPQGQP). Over residues 558–579 (LPGPPGPPGPPGPPAVMPPTPA) the composition is skewed to pro residues. Residues 572-744 (AVMPPTPAPQ…SFSGYLLYPM (173 aa)) are nonhelical region (NC1). The region spanning 611–744 (PAYEMPAFTA…SFSGYLLYPM (134 aa)) is the C1q domain.

As to quaternary structure, homotrimers, or heterotrimers in association with alpha 2(VIII) type collagens. Four homotrimers can form a tetrahedron stabilized by central interacting C-terminal NC1 trimers. In terms of processing, prolines at the third position of the tripeptide repeating unit (G-X-Y) are hydroxylated in some or all of the chains. Post-translationally, proteolytically cleaved by neutrophil elastase, in vitro. Proteolytic processing produces the C-terminal NC1 domain fragment, vastatin.

It is found in the secreted. The protein resides in the extracellular space. The protein localises to the extracellular matrix. Its subcellular location is the basement membrane. In terms of biological role, macromolecular component of the subendothelium. Major component of the Descemet's membrane (basement membrane) of corneal endothelial cells. Also a component of the endothelia of blood vessels. Necessary for migration and proliferation of vascular smooth muscle cells and thus, has a potential role in the maintenance of vessel wall integrity and structure, in particular in atherogenesis. Functionally, vastatin, the C-terminal fragment comprising the NC1 domain, inhibits aortic endothelial cell proliferation and causes cell apoptosis. The protein is Collagen alpha-1(VIII) chain (COL8A1) of Oryctolagus cuniculus (Rabbit).